A 145-amino-acid chain; its full sequence is MVKVMVVAEVRPSEDVNKVLSAISNFFDFEKMNTRKEGIIDILVLEARTLKSLLKFHRVLRNERILDSARKYLMKGIEGNTIAFMIHKQAAAVGVLSFVDSDKESPLGAIKFYIEYQNPKEIVDWLAPKTAHGVPLWDNPVPPDV.

This sequence belongs to the UPF0201 family.

The chain is UPF0201 protein SSO1042 from Saccharolobus solfataricus (strain ATCC 35092 / DSM 1617 / JCM 11322 / P2) (Sulfolobus solfataricus).